A 491-amino-acid chain; its full sequence is Serine/threonine-protein kinase 33 (491 aa).

Residues 51–89 (FASQERKKERNTSRESSLKDLSIRTSNVERKPQAQWSRS) form a disordered region. Residues 54–82 (QERKKERNTSRESSLKDLSIRTSNVERKP) are compositionally biased toward basic and acidic residues. The Protein kinase domain occupies 111–377 (YTFGRILGQG…AKELLDNQWL (267 aa)). ATP-binding positions include 117 to 125 (LGQGSFGMV) and K140. The active-site Proton acceptor is D233. Residues 398-491 (KNNPESDEET…TTLFRGKKRL (94 aa)) are disordered. Over residues 402 to 414 (ESDEETNTDEETE) the composition is skewed to acidic residues. S403 carries the post-translational modification Phosphoserine. A compositionally biased stretch (polar residues) spans 415 to 431 (QSAVYSPSANTAKQPTN). Residues 445 to 457 (SSNSSSSKLLSAE) show a composition bias toward low complexity. The span at 475-484 (AKTTLKSTTL) shows a compositional bias: polar residues.

Belongs to the protein kinase superfamily. CAMK Ser/Thr protein kinase family. CaMK subfamily. As to quaternary structure, homodimer. Autophosphorylated. As to expression, highly expressed in testis, particularly in cells from the spermatogenic epithelia. Present in meiotic and post meiotic sperm cells. Significant expression is detected in lung epithelia, alveolar macrophages, horizontal cells in the retina and in embryonic organs such as heart, brain and spinal cord. Also expressed in pituitary gland, kidney, pancreas, trachea and thyroid gland.

It is found in the cytoplasm. It localises to the cytoskeleton. The protein resides in the perinuclear region. It carries out the reaction L-seryl-[protein] + ATP = O-phospho-L-seryl-[protein] + ADP + H(+). The enzyme catalyses L-threonyl-[protein] + ATP = O-phospho-L-threonyl-[protein] + ADP + H(+). Specifically inhibited by CDD-2807 ((3-([1,1'-Biphenyl]-2-ylethynyl)-1H-indazol-5-yl)(2,6-diazaspiro[3.5]nonan-2-yl)methanone). CDD-2807 is a potential male contraceptive drug: it is not toxic, efficiently crosses the blood-testis barrier and induces a reversible contraceptive effect in male mice. In terms of biological role, serine/threonine protein kinase required for spermatid differentiation and male fertility. Promotes sperm flagella assembly during spermatogenesis by mediating phosphorylation of fibrous sheath proteins AKAP3 and AKAP4. Also phosphorylates vimentin/VIM, thereby regulating the dynamic behavior of the intermediate filament cytoskeleton. The chain is Serine/threonine-protein kinase 33 from Mus musculus (Mouse).